The primary structure comprises 476 residues: Glycogen synthase (476 aa).

Lysine 15 lines the ADP-alpha-D-glucose pocket.

The protein belongs to the glycosyltransferase 1 family. Bacterial/plant glycogen synthase subfamily.

The enzyme catalyses [(1-&gt;4)-alpha-D-glucosyl](n) + ADP-alpha-D-glucose = [(1-&gt;4)-alpha-D-glucosyl](n+1) + ADP + H(+). It participates in glycan biosynthesis; glycogen biosynthesis. In terms of biological role, synthesizes alpha-1,4-glucan chains using ADP-glucose. The protein is Glycogen synthase of Actinobacillus succinogenes (strain ATCC 55618 / DSM 22257 / CCUG 43843 / 130Z).